We begin with the raw amino-acid sequence, 173 residues long: ATP synthase subunit beta, mitochondrial (173 aa).

It belongs to the ATPase alpha/beta chains family. F-type ATPases have 2 components, CF(1) - the catalytic core - and CF(0) - the membrane proton channel. CF(1) has five subunits: alpha(3), beta(3), gamma(1), delta(1), epsilon(1). CF(0) has three main subunits: a, b and c.

It localises to the mitochondrion. Its subcellular location is the mitochondrion inner membrane. The enzyme catalyses ATP + H2O + 4 H(+)(in) = ADP + phosphate + 5 H(+)(out). Functionally, mitochondrial membrane ATP synthase (F(1)F(0) ATP synthase or Complex V) produces ATP from ADP in the presence of a proton gradient across the membrane which is generated by electron transport complexes of the respiratory chain. F-type ATPases consist of two structural domains, F(1) - containing the extramembraneous catalytic core and F(0) - containing the membrane proton channel, linked together by a central stalk and a peripheral stalk. During catalysis, ATP synthesis in the catalytic domain of F(1) is coupled via a rotary mechanism of the central stalk subunits to proton translocation. Subunits alpha and beta form the catalytic core in F(1). Rotation of the central stalk against the surrounding alpha(3)beta(3) subunits leads to hydrolysis of ATP in three separate catalytic sites on the beta subunits. The sequence is that of ATP synthase subunit beta, mitochondrial (ATPB) from Actinidia deliciosa (Kiwi).